A 217-amino-acid polypeptide reads, in one-letter code: C-type lectin domain family 2 member I (217 aa).

Residues 1–53 (MPDCLETGEKLFVHNMNAQCVQKPEEGNGPLGTGGKIVQGKCFRIISTVSPVK) are Cytoplasmic-facing. The chain crosses the membrane as a helical; Signal-anchor for type II membrane protein span at residues 54 to 74 (LYCCYGVIMVLTVAVIALSVA). At 75-217 (LSTKKTEQII…YNLHCQTPPV (143 aa)) the chain is on the extracellular side. Cys92 and Cys103 are oxidised to a cystine. The 105-residue stretch at 99 to 203 (VGNKCFYFSG…SYINRMWICS (105 aa)) folds into the C-type lectin domain. A glycan (N-linked (GlcNAc...) asparagine) is linked at Asn112. Cys120 and Cys202 form a disulfide bridge.

In terms of tissue distribution, detected in osteoblasts, growth plate chondrocytes and skeletal muscle overlying the bone (at protein level). Detected in spleen, B-cells, dendritic cells, thymus, and in IL2-activated natural killer cells.

The protein localises to the cell membrane. Inhibits osteoclast formation. Receptor for KLRB1F. Enhances T-cell activation. Plays a role in splenocyte activation, T-cell responses and IL-2 production. The sequence is that of C-type lectin domain family 2 member I (Clec2i) from Mus musculus (Mouse).